The following is a 362-amino-acid chain: MQAERGARGGRGRRPGRGRPGGDRHSERPGAAAAVARGGGGGGGGDGGGRRGRGRGRGFRGARGGRGGGGAPRGSRREPGGWGAGASAPVEDDSDAETYGEENDEQGNYSKRKIVSNWDRYQDIEKEVNNESGESQRGTDFSVLLSSAGDSFSQFRFAEEKEWDSEASCPKQNSAFYVDSELLVRALQELPLCLRLNVAAELVQGTVPLEVPQVKPKRTDDGKGLGMQLKGPLGPGGRGPIFELKSVAAGCPVLLGKDNPSPGPSRDSQKPTSPLQSAGDHLEEELDLLLNLDAPIKEGDNILPDQTSQDLKSKEDGEVVQEEEVCAKPSVTEEKNMEPEQPSTSKNVTEEELEDWLDSMIS.

Disordered stretches follow at residues 1 to 111 (MQAE…NYSK), 214 to 237 (VKPKRTDDGKGLGMQLKGPLGPGG), and 253 to 362 (VLLG…SMIS). The segment covering 8–17 (RGGRGRRPGR) has biased composition (basic residues). Residues 37–47 (RGGGGGGGGDG) are compositionally biased toward gly residues. Over residues 50-60 (RRGRGRGRGFR) the composition is skewed to basic residues. The segment covering 61 to 72 (GARGGRGGGGAP) has biased composition (gly residues). A compositionally biased stretch (acidic residues) spans 90–105 (VEDDSDAETYGEENDE). At serine 94 the chain carries Phosphoserine. Lysine 230 is modified (N6-methyllysine). Acidic residues predominate over residues 350–362 (EEELEDWLDSMIS).

As to quaternary structure, binds Apaf-1, BCL-2 and BAD (Bcl-xl). In terms of tissue distribution, highly expressed in testis, ovary, thymus, prostate, spleen, small intestine, colon, heart, skeletal muscle, liver, kidney and pancreas.

It is found in the endomembrane system. Its function is as follows. Protects against apoptosis mediated by Apaf-1. The polypeptide is Cell death regulator Aven (AVEN) (Homo sapiens (Human)).